We begin with the raw amino-acid sequence, 228 residues long: Cytochrome c oxidase subunit 2 (228 aa).

Over 1 to 26 the chain is Mitochondrial intermembrane; the sequence is MRTWSNFNLQNSASPLMEQIIFFHDH. The chain crosses the membrane as a helical span at residues 27–48; the sequence is TLIILIMITILVGYIMINLFFN. At 49–62 the chain is on the mitochondrial matrix side; the sequence is KFINRFFLVGQMIE. The helical transmembrane segment at 63-82 threads the bilayer; that stretch reads LIWTVLPAITLIFIALPSLR. Over 83-228 the chain is Mitochondrial intermembrane; the sequence is LLYLLDELNN…FINWINNYSY (146 aa). Residues H161, C196, E198, C200, H204, and M207 each coordinate Cu cation. E198 provides a ligand contact to Mg(2+).

This sequence belongs to the cytochrome c oxidase subunit 2 family. In terms of assembly, component of the cytochrome c oxidase (complex IV, CIV), a multisubunit enzyme composed of a catalytic core of 3 subunits and several supernumerary subunits. The complex exists as a monomer or a dimer and forms supercomplexes (SCs) in the inner mitochondrial membrane with ubiquinol-cytochrome c oxidoreductase (cytochrome b-c1 complex, complex III, CIII). Cu cation is required as a cofactor.

The protein resides in the mitochondrion inner membrane. The catalysed reaction is 4 Fe(II)-[cytochrome c] + O2 + 8 H(+)(in) = 4 Fe(III)-[cytochrome c] + 2 H2O + 4 H(+)(out). Component of the cytochrome c oxidase, the last enzyme in the mitochondrial electron transport chain which drives oxidative phosphorylation. The respiratory chain contains 3 multisubunit complexes succinate dehydrogenase (complex II, CII), ubiquinol-cytochrome c oxidoreductase (cytochrome b-c1 complex, complex III, CIII) and cytochrome c oxidase (complex IV, CIV), that cooperate to transfer electrons derived from NADH and succinate to molecular oxygen, creating an electrochemical gradient over the inner membrane that drives transmembrane transport and the ATP synthase. Cytochrome c oxidase is the component of the respiratory chain that catalyzes the reduction of oxygen to water. Electrons originating from reduced cytochrome c in the intermembrane space (IMS) are transferred via the dinuclear copper A center (CU(A)) of subunit 2 and heme A of subunit 1 to the active site in subunit 1, a binuclear center (BNC) formed by heme A3 and copper B (CU(B)). The BNC reduces molecular oxygen to 2 water molecules using 4 electrons from cytochrome c in the IMS and 4 protons from the mitochondrial matrix. In Galleria mellonella (Greater wax moth), this protein is Cytochrome c oxidase subunit 2 (COII).